The primary structure comprises 76 residues: Small proline-rich protein 2I (76 aa).

A run of 3 repeats spans residues 21-29 (KKCPEPCPP), 30-38 (PQCPEPCPP), and 39-47 (PKCPEPCPE). Residues 21-47 (KKCPEPCPPPQCPEPCPPPKCPEPCPE) form a 3 X 9 AA approximate tandem repeats region. Over residues 40–53 (KCPEPCPESCPPPS) the composition is skewed to pro residues. The tract at residues 40 to 76 (KCPEPCPESCPPPSYQQKCPPVQPPPPCQQKCPPKSK) is disordered.

This sequence belongs to the cornifin (SPRR) family. Not expressed in uterus.

It localises to the cytoplasm. Its function is as follows. Cross-linked envelope protein of keratinocytes. It is a keratinocyte protein that first appears in the cell cytosol, but ultimately becomes cross-linked to membrane proteins by transglutaminase. All that results in the formation of an insoluble envelope beneath the plasma membrane. The protein is Small proline-rich protein 2I (Sprr2i) of Mus musculus (Mouse).